The following is a 406-amino-acid chain: Renin (406 aa).

The first 23 residues, 1–23, serve as a signal peptide directing secretion; that stretch reads MDGWRRMPRWGLLLLLWGSCTFG. The propeptide at 24–66 is activation peptide; the sequence is LPTDTTTFKRIFLKRMPSIRESLKERGVDMARLGPEWSQPMKR. Asn-71 carries an N-linked (GlcNAc...) asparagine glycan. Residues 86–403 form the Peptidase A1 domain; sequence YYGEIGIGTP…DRRNNRIGFA (318 aa). Asp-104 is an active-site residue. A disulfide bridge connects residues Cys-117 and Cys-124. Asn-141 carries an N-linked (GlcNAc...) asparagine glycan. A disulfide bridge links Cys-283 with Cys-287. Asp-292 is an active-site residue. An intrachain disulfide couples Cys-325 to Cys-362.

Belongs to the peptidase A1 family. In terms of assembly, interacts with ATP6AP2.

It is found in the secreted. Its subcellular location is the membrane. It carries out the reaction Cleavage of Leu-|-Xaa bond in angiotensinogen to generate angiotensin I.. With respect to regulation, interaction with ATP6AP2 results in a 5-fold increased efficiency in angiotensinogen processing. In terms of biological role, renin is a highly specific endopeptidase, whose only known function is to generate angiotensin I from angiotensinogen in the plasma, initiating a cascade of reactions that produce an elevation of blood pressure and increased sodium retention by the kidney. The protein is Renin (REN) of Homo sapiens (Human).